Here is a 358-residue protein sequence, read N- to C-terminus: Phosphoserine aminotransferase (358 aa).

Arg-41 is an L-glutamate binding site. Pyridoxal 5'-phosphate-binding positions include 75–76 (AS), Trp-100, Thr-148, Asp-167, and Gln-190. Lys-191 carries the post-translational modification N6-(pyridoxal phosphate)lysine. 233–234 (NT) is a binding site for pyridoxal 5'-phosphate.

Belongs to the class-V pyridoxal-phosphate-dependent aminotransferase family. SerC subfamily. In terms of assembly, homodimer. It depends on pyridoxal 5'-phosphate as a cofactor.

It is found in the cytoplasm. The enzyme catalyses O-phospho-L-serine + 2-oxoglutarate = 3-phosphooxypyruvate + L-glutamate. It carries out the reaction 4-(phosphooxy)-L-threonine + 2-oxoglutarate = (R)-3-hydroxy-2-oxo-4-phosphooxybutanoate + L-glutamate. It functions in the pathway amino-acid biosynthesis; L-serine biosynthesis; L-serine from 3-phospho-D-glycerate: step 2/3. The protein operates within cofactor biosynthesis; pyridoxine 5'-phosphate biosynthesis; pyridoxine 5'-phosphate from D-erythrose 4-phosphate: step 3/5. In terms of biological role, catalyzes the reversible conversion of 3-phosphohydroxypyruvate to phosphoserine and of 3-hydroxy-2-oxo-4-phosphonooxybutanoate to phosphohydroxythreonine. The sequence is that of Phosphoserine aminotransferase from Campylobacter lari (strain RM2100 / D67 / ATCC BAA-1060).